Consider the following 373-residue polypeptide: P2Y purinoceptor 1 (373 aa).

Residues 1–51 (MTEVLWPAVPNGTDTAFLADPGSPWGNSTVTSTAAVASPFKCALTKTGFQF) are Extracellular-facing. N11 and N27 each carry an N-linked (GlcNAc...) asparagine glycan. Cystine bridges form between C42–C296 and C124–C202. K46 is an ADP binding site. A helical transmembrane segment spans residues 52–74 (YYLPAVYILVFIIGFLGNSVAIW). The Cytoplasmic segment spans residues 75-87 (MFVFHMKPWSGIS). Residues 88 to 109 (VYMFNLALADFLYVLTLPALIF) form a helical membrane-spanning segment. Residues 110 to 125 (YYFNKTDWIFGDAMCK) lie on the Extracellular side of the membrane. N113 carries N-linked (GlcNAc...) asparagine glycosylation. Residues 126 to 147 (LQRFIFHVNLYGSILFLTCISA) form a helical membrane-spanning segment. Topologically, residues 148–166 (HRYSGVVYPLKSLGRLKKK) are cytoplasmic. The helical transmembrane segment at 167 to 188 (NAVYISVLVWLIVVVGISPILF) threads the bilayer. Residues 189–214 (YSGTGIRKNKTITCYDTTSDEYLRSY) are Extracellular-facing. N197 carries an N-linked (GlcNAc...) asparagine glycan. 203-205 (YDT) provides a ligand contact to ADP. Residues 215–237 (FIYSMCTTVAMFCVPLVLILGCY) traverse the membrane as a helical segment. Topologically, residues 238–260 (GLIVRALIYKDLDNSPLRRKSIY) are cytoplasmic. The helical transmembrane segment at 261 to 284 (LVIIVLTVFAVSYIPFHVMKTMNL) threads the bilayer. ADP is bound by residues 283-287 (NLRAR), 303-306 (YATY), and R310. The Extracellular segment spans residues 285-303 (RARLDFQTPEMCAFNDRVY). Residues 304–325 (ATYQVTRGLASLNSCVDPILYF) form a helical membrane-spanning segment. Residues 326-373 (LAGDTFRRRLSRATRKASRRSEANLQSKSEDMTLNILSEFKQNGDTSL) are Cytoplasmic-facing.

The protein belongs to the G-protein coupled receptor 1 family.

The protein resides in the cell membrane. In terms of biological role, receptor for extracellular adenine nucleotides such as ADP. In platelets, binding to ADP leads to mobilization of intracellular calcium ions via activation of phospholipase C, a change in platelet shape, and ultimately platelet aggregation. This is P2Y purinoceptor 1 (P2RY1) from Bos taurus (Bovine).